Consider the following 141-residue polypeptide: Hemoglobin subunit alpha-A (141 aa).

Positions 1-141 (VLSGPDKTNV…VGAVLTAKYR (141 aa)) constitute a Globin domain. H58 provides a ligand contact to O2. Position 87 (H87) interacts with heme b.

It belongs to the globin family. As to quaternary structure, heterotetramer of two alpha chains and two beta chains. As to expression, red blood cells.

Its function is as follows. Involved in oxygen transport from the lung to the various peripheral tissues. In Rhea americana (Greater rhea), this protein is Hemoglobin subunit alpha-A (HBAA).